The primary structure comprises 60 residues: Large ribosomal subunit protein bL32 (60 aa).

Positions 1-16 are enriched in basic residues; the sequence is MAVPKKKTSKSRKNMR. Residues 1–20 are disordered; it reads MAVPKKKTSKSRKNMRRAHD.

This sequence belongs to the bacterial ribosomal protein bL32 family.

The chain is Large ribosomal subunit protein bL32 from Geobacter metallireducens (strain ATCC 53774 / DSM 7210 / GS-15).